The chain runs to 150 residues: UPF0178 protein Sbal195_1808 (150 aa).

Belongs to the UPF0178 family.

The protein is UPF0178 protein Sbal195_1808 of Shewanella baltica (strain OS195).